Here is a 405-residue protein sequence, read N- to C-terminus: Tyrosine-protein phosphatase non-receptor type eak-6 (405 aa).

The Tyrosine-protein phosphatase domain occupies 30 to 309 (INQRINIIAD…SFIYDIIIKY (280 aa)). Catalysis depends on Cys-248, which acts as the Phosphocysteine intermediate.

The protein belongs to the protein-tyrosine phosphatase family. Expressed in the 2 embryonic head hypodermal cells XXXL/R.

Its subcellular location is the cytoplasm. It is found in the cell membrane. The catalysed reaction is O-phospho-L-tyrosyl-[protein] + H2O = L-tyrosyl-[protein] + phosphate. Putative phosphatase which, together with eak-4 and sdf-9, negatively regulates dauer larva formation downstream of insulin-like receptor daf-2 and in parallel of age-1, pdk-1 and akt-1. The polypeptide is Tyrosine-protein phosphatase non-receptor type eak-6 (Caenorhabditis elegans).